The chain runs to 645 residues: Methionine--tRNA ligase (645 aa).

The 'HIGH' region motif lies at 13–23 (YYPSTNLHIGN). Residues C128, C131, C145, and C148 each contribute to the Zn(2+) site. The 'KMSKS' region motif lies at 298–302 (KMSKS). K301 is a binding site for ATP. One can recognise a tRNA-binding domain in the interval 544 to 645 (DFDKIDLRVV…GEMLTGSQVR (102 aa)).

Belongs to the class-I aminoacyl-tRNA synthetase family. MetG type 2A subfamily. In terms of assembly, homodimer. It depends on Zn(2+) as a cofactor.

It localises to the cytoplasm. The catalysed reaction is tRNA(Met) + L-methionine + ATP = L-methionyl-tRNA(Met) + AMP + diphosphate. Its function is as follows. Is required not only for elongation of protein synthesis but also for the initiation of all mRNA translation through initiator tRNA(fMet) aminoacylation. The chain is Methionine--tRNA ligase (metG) from Clostridium perfringens (strain 13 / Type A).